The chain runs to 152 residues: Large ribosomal subunit protein uL15 (152 aa).

The tract at residues 1–56 (MELNTLKPAKNSVKQNTRYGRGQGSGKGGTSTRGHKGAKSRSGYKSKPGFEGGQLP) is disordered. Positions 21–31 (RGQGSGKGGTS) are enriched in gly residues. The segment covering 33 to 44 (RGHKGAKSRSGY) has biased composition (basic residues).

It belongs to the universal ribosomal protein uL15 family. In terms of assembly, part of the 50S ribosomal subunit.

Its function is as follows. Binds to the 23S rRNA. This Amoebophilus asiaticus (strain 5a2) protein is Large ribosomal subunit protein uL15.